A 379-amino-acid chain; its full sequence is Putative zinc metalloprotease sll0528 (379 aa).

Transmembrane regions (helical) follow at residues 20 to 40 (LFGIPFYVNPSWFLILGLVTL) and 54 to 74 (GGTPWILGLITALLLFASVVA). Histidine 75 contacts Zn(2+). The active site involves glutamate 76. Histidine 79 provides a ligand contact to Zn(2+). 3 helical membrane-spanning segments follow: residues 115-135 (FAVAIAGPAVSLVLFLGLTIV), 148-168 (IIGLLGMINLALALFNLIPGL), and 212-232 (GILNILPIGSFWTILIGWFLL). CBS domains lie at 257 to 315 (VIPN…DWPQ) and 322 to 379 (MQYP…TSAA).

This sequence belongs to the peptidase M50B family. Zn(2+) serves as cofactor.

It is found in the cell membrane. This Synechocystis sp. (strain ATCC 27184 / PCC 6803 / Kazusa) protein is Putative zinc metalloprotease sll0528.